The chain runs to 228 residues: Potassium/proton antiporter CemA (228 aa).

Helical transmembrane passes span 6–26 (FIPL…SFSF), 113–133 (IICF…LFIL), and 188–208 (IISG…KYWI).

The protein belongs to the CemA family.

It localises to the plastid. Its subcellular location is the chloroplast inner membrane. The enzyme catalyses K(+)(in) + H(+)(out) = K(+)(out) + H(+)(in). In terms of biological role, contributes to K(+)/H(+) antiport activity by supporting proton efflux to control proton extrusion and homeostasis in chloroplasts in a light-dependent manner to modulate photosynthesis. Prevents excessive induction of non-photochemical quenching (NPQ) under continuous-light conditions. Indirectly promotes efficient inorganic carbon uptake into chloroplasts. The chain is Potassium/proton antiporter CemA from Populus alba (White poplar).